The following is a 962-amino-acid chain: Rho GTPase-activating protein syd-1 (962 aa).

Disordered stretches follow at residues 231-367 (GKKS…MRSD), 397-419 (PRTLRQPNDSNKSNSLPRRRIMT), and 437-471 (CGEESDGAISAPEYSSPPFSRLTQQQQFRLSNGSP). Polar residues-rich tracts occupy residues 243–261 (NATTTSTMRAAHASTSSPR), 323–345 (SFNSAPGVSSSAPMYTLPRSSTA), 401–412 (RQPNDSNKSNSL), and 453–471 (PPFSRLTQQQQFRLSNGSP). Residues 572–696 (RAAGPGINVD…NDDRVFALNL (125 aa)) form the C2 domain. In terms of domain architecture, Rho-GAP spans 729 to 923 (VPLGRLVQRE…LDMNQASSSL (195 aa)). Residues 934–947 (VNSESGSDSPATSG) are compositionally biased toward polar residues. Residues 934 to 962 (VNSESGSDSPATSGQKGGGGVSYVSESQC) are disordered.

It localises to the synapse. Probable GTPase activator for the Rho-type GTPases by converting them to an inactive GDP-bound state. Regulates the localization and assembly of presynaptic components during presynaptic development and is required for specifying the identity of axons during initial polarity acquisition. In these roles it is thought to act cell autonomously downstream of syg-1 and syg-2 and upstream of syd-2, possibly as a positive regulator of the latter. Required for the control of movement, egg-laying and the correct localization of elks-1. This chain is Rho GTPase-activating protein syd-1, found in Caenorhabditis briggsae.